The sequence spans 247 residues: UPF0273 protein PH0284 (247 aa).

The region spanning Arg-3–Leu-247 is the KaiC domain. Residue Gly-30 to Thr-37 coordinates ATP.

It belongs to the UPF0273 family.

This chain is UPF0273 protein PH0284, found in Pyrococcus horikoshii (strain ATCC 700860 / DSM 12428 / JCM 9974 / NBRC 100139 / OT-3).